The chain runs to 291 residues: MKRIALFLLTNLAVVVVLGIVASLLGVNRYLTANGLNLGALLGFAFIMGFGGAIISLLMSKPIAKWSSGVRVIDGTGSADEAWIVQTVRKFADQAGIGMPEVGIFEGDPNAFATGAFKNNALVAVSTGLLQGMTREEVEAVIGHEVAHIANGDMVTMTLIQGVMNTFVVFLSRVIGYAVDSFLRRNDENSSGPGIGYMVTTIVLDIVLGFLASMIVAWFSRQREFRADAGAARLMGRRQPMINALARLGGMHPAELPKGLQAMGIAGGIGKLFSTHPPIEERIAALQNAQG.

2 helical membrane-spanning segments follow: residues Ile-4 to Leu-24 and Leu-38 to Leu-58. His-144 provides a ligand contact to Zn(2+). Glu-145 is a catalytic residue. His-148 contacts Zn(2+). 2 helical membrane passes run Leu-159–Val-179 and Val-199–Phe-219. Residue Glu-224 participates in Zn(2+) binding.

The protein belongs to the peptidase M48B family. The cofactor is Zn(2+).

Its subcellular location is the cell inner membrane. In Paracidovorax citrulli (strain AAC00-1) (Acidovorax citrulli), this protein is Protease HtpX homolog.